We begin with the raw amino-acid sequence, 714 residues long: Polyribonucleotide nucleotidyltransferase (714 aa).

Mg(2+)-binding residues include aspartate 490 and aspartate 496. The KH domain maps to 556–615 (PRIETMQIPTDKIREVIGSGGKVIREIVEVSGAKVDINDDGIIKIASPNGDSIKKAYDMI). In terms of domain architecture, S1 motif spans 625 to 693 (GQVYTGKVVK…DRGKVRLSMK (69 aa)).

This sequence belongs to the polyribonucleotide nucleotidyltransferase family. Requires Mg(2+) as cofactor.

Its subcellular location is the cytoplasm. The catalysed reaction is RNA(n+1) + phosphate = RNA(n) + a ribonucleoside 5'-diphosphate. In terms of biological role, involved in mRNA degradation. Catalyzes the phosphorolysis of single-stranded polyribonucleotides processively in the 3'- to 5'-direction. In Ruegeria pomeroyi (strain ATCC 700808 / DSM 15171 / DSS-3) (Silicibacter pomeroyi), this protein is Polyribonucleotide nucleotidyltransferase.